Consider the following 389-residue polypeptide: Chalcone synthase J (389 aa).

The active site involves Cys164.

The protein belongs to the thiolase-like superfamily. Chalcone/stilbene synthases family.

The enzyme catalyses (E)-4-coumaroyl-CoA + 3 malonyl-CoA + 3 H(+) = 2',4,4',6'-tetrahydroxychalcone + 3 CO2 + 4 CoA. The protein operates within secondary metabolite biosynthesis; flavonoid biosynthesis. Its function is as follows. The primary product of this enzyme is 4,2',4',6'-tetrahydroxychalcone (also termed naringenin-chalcone or chalcone) which can under specific conditions spontaneously isomerize into naringenin. This is Chalcone synthase J (CHSJ) from Petunia hybrida (Petunia).